The chain runs to 151 residues: HTH-type transcriptional regulator FL11 (151 aa).

The HTH asnC-type domain occupies 5–66 (LDEIDKKIIK…IIDPEALGYS (62 aa)). Residues 24 to 43 (LREISKITGLAESTIHERIR) constitute a DNA-binding region (H-T-H motif). 98–104 (ETTGDYD) contributes to the L-arginine binding site. Residues asparagine 118, aspartate 122, and 133–135 (THT) each bind L-lysine. Residues aspartate 122 and 133–135 (THT) contribute to the L-arginine site.

Homodimer. Binds DNA as a dimer and an octamer. The octamer formed with lysine is stable in solution, but the octamer formed with arginine is unstable without DNA. When crystallized in the absence of DNA, dimers are assembled into helical cylinders with six dimers per turn. In solution, predominantly behaves as a dimer.

With respect to regulation, in the famine mode, FL11 forms dimers and acts as a repressor, leading to growth arrest. In the feast mode, in the presence of high concentrations of lysine or arginine, four dimers assemble into an octamer and cover the fl11 and lysine biosynthesis promoters. This leads to the inhibition of fl11 expression and lysine biosynthesis, decrease of the FL11 concentration in the cell, derepression of the target genes and activation of the metabolism. DNA-binding protein involved in the repression of transcription of a large number of genes, thereby arresting growth, in response to environmental changes. Binding sites are identified in promoters of approximately 200 transcription units, including genes involved in ATP synthesis, transmembrane transport, translation and DNA synthesis. The chain is HTH-type transcriptional regulator FL11 from Pyrococcus horikoshii (strain ATCC 700860 / DSM 12428 / JCM 9974 / NBRC 100139 / OT-3).